The primary structure comprises 317 residues: MNPKHTPIDTTGLTPEMRSHVLAEALPWLLHYRDKIVVVKYGGNAMIDEDLKRAFAADMVFLRAIGARPVVVHGGGPQINEMLKTVGLEGEFKGGFRVTTPEVMEYVRMVLFGKVGRELVGLINEHGPYAVGASGEDAGLFTASKRMITVDGEEVDLGRVGQIEHVDAESLIDLIDAGRIPVVSTVAPDDQGRIYNINADTAAGALAGALGAERLVMLTNVKGLYTDWPNKESLVSSLTPEQLSDLLPNLDSGMVPKMEACLDALRSGVQAAHVIDGRIPHSVILELMTTGGIGTMICPAGWEDIASPDINYREDLP.

Substrate-binding positions include 75 to 76, R97, and N196; that span reads GG.

The protein belongs to the acetylglutamate kinase family. ArgB subfamily.

The protein resides in the cytoplasm. It carries out the reaction N-acetyl-L-glutamate + ATP = N-acetyl-L-glutamyl 5-phosphate + ADP. It functions in the pathway amino-acid biosynthesis; L-arginine biosynthesis; N(2)-acetyl-L-ornithine from L-glutamate: step 2/4. Catalyzes the ATP-dependent phosphorylation of N-acetyl-L-glutamate. The polypeptide is Acetylglutamate kinase (Corynebacterium jeikeium (strain K411)).